Here is a 132-residue protein sequence, read N- to C-terminus: Small ribosomal subunit protein uS8 (132 aa).

It belongs to the universal ribosomal protein uS8 family. Part of the 30S ribosomal subunit. Contacts proteins S5 and S12.

In terms of biological role, one of the primary rRNA binding proteins, it binds directly to 16S rRNA central domain where it helps coordinate assembly of the platform of the 30S subunit. The polypeptide is Small ribosomal subunit protein uS8 (Micrococcus luteus (strain ATCC 4698 / DSM 20030 / JCM 1464 / CCM 169 / CCUG 5858 / IAM 1056 / NBRC 3333 / NCIMB 9278 / NCTC 2665 / VKM Ac-2230) (Micrococcus lysodeikticus)).